The sequence spans 383 residues: uncharacterized protein (383 aa).

C12, C18, C21, and C88 together coordinate [4Fe-4S] cluster. The S-adenosyl-L-methionine site is built by Q219, F246, E267, and D314. C341 (nucleophile) is an active-site residue.

Belongs to the class I-like SAM-binding methyltransferase superfamily. RNA M5U methyltransferase family.

This is an uncharacterized protein from Protochlamydia amoebophila (strain UWE25).